Reading from the N-terminus, the 63-residue chain is Large ribosomal subunit protein uL29 (63 aa).

It belongs to the universal ribosomal protein uL29 family.

The sequence is that of Large ribosomal subunit protein uL29 from Alteromonas mediterranea (strain DSM 17117 / CIP 110805 / LMG 28347 / Deep ecotype).